Reading from the N-terminus, the 88-residue chain is Putative membrane protein insertion efficiency factor (88 aa).

The protein belongs to the UPF0161 family.

It is found in the cell membrane. Could be involved in insertion of integral membrane proteins into the membrane. The sequence is that of Putative membrane protein insertion efficiency factor (yrcB) from Lactococcus lactis subsp. lactis (strain IL1403) (Streptococcus lactis).